We begin with the raw amino-acid sequence, 386 residues long: Pepsin A (386 aa).

The first 15 residues, 1 to 15, serve as a signal peptide directing secretion; the sequence is MKWLLLLSLVALSEC. Residues 16–60 constitute a propeptide, activation peptide; the sequence is YIYKVPLVKKKSLRKNLMEQGLLQDYLKTHSINPASKYLKEAASM. The Peptidase A1 domain maps to 74 to 383; the sequence is YFGTIGIGTP…DRGNNQVGLA (310 aa). D92 is a catalytic residue. 2 cysteine pairs are disulfide-bonded: C105/C110 and C266/C270. D275 is a catalytic residue. A disulfide bridge links C309 with C342.

The protein belongs to the peptidase A1 family.

The protein localises to the secreted. The catalysed reaction is Preferential cleavage: hydrophobic, preferably aromatic, residues in P1 and P1' positions. Cleaves 1-Phe-|-Val-2, 4-Gln-|-His-5, 13-Glu-|-Ala-14, 14-Ala-|-Leu-15, 15-Leu-|-Tyr-16, 16-Tyr-|-Leu-17, 23-Gly-|-Phe-24, 24-Phe-|-Phe-25 and 25-Phe-|-Tyr-26 bonds in the B chain of insulin.. Its function is as follows. Shows particularly broad specificity; although bonds involving phenylalanine and leucine are preferred, many others are also cleaved to some extent. The polypeptide is Pepsin A (PGA) (Rhinolophus ferrumequinum (Greater horseshoe bat)).